The sequence spans 467 residues: Inactive pancreatic lipase-related protein 1 (467 aa).

An N-terminal signal peptide occupies residues 1 to 17; the sequence is MVSIWTIALFLLGAAKA. Disulfide bonds link C21/C27 and C109/C120. Residue N157 is glycosylated (N-linked (GlcNAc...) asparagine). S171 acts as the Nucleophile in catalysis. The Charge relay system role is filled by D194. Ca(2+)-binding residues include E205, R208, D210, and D213. Residues C255 and C279 are joined by a disulfide bond. H281 (charge relay system) is an active-site residue. Disulfide bonds link C303–C314, C317–C322, and C451–C467. The PLAT domain occupies 356–467; sequence WRYGVSITLS…EDVLLTLTPC (112 aa).

Belongs to the AB hydrolase superfamily. Lipase family. As to expression, detected in pancreas (at protein level).

Its subcellular location is the secreted. In terms of biological role, may function as inhibitor of dietary triglyceride digestion. Lacks detectable lipase activity towards triglycerides, diglycerides, phosphatidylcholine, galactolipids or cholesterol esters (in vitro). The protein is Inactive pancreatic lipase-related protein 1 (PNLIPRP1) of Canis lupus familiaris (Dog).